A 118-amino-acid chain; its full sequence is NADH-quinone oxidoreductase subunit A 1 (118 aa).

Helical transmembrane passes span 1–21, 60–80, and 87–107; these read MLGVYLPIIVLVAVAVIFGLA, FYIIAMLFILFDIEAVFMYPW, and LGIFGVVEMGLFIVILFVGYI.

Belongs to the complex I subunit 3 family. NDH-1 is composed of 14 different subunits. Subunits NuoA, H, J, K, L, M, N constitute the membrane sector of the complex.

Its subcellular location is the cell inner membrane. The enzyme catalyses a quinone + NADH + 5 H(+)(in) = a quinol + NAD(+) + 4 H(+)(out). In terms of biological role, NDH-1 shuttles electrons from NADH, via FMN and iron-sulfur (Fe-S) centers, to quinones in the respiratory chain. The immediate electron acceptor for the enzyme in this species is believed to be ubiquinone. Couples the redox reaction to proton translocation (for every two electrons transferred, four hydrogen ions are translocated across the cytoplasmic membrane), and thus conserves the redox energy in a proton gradient. The protein is NADH-quinone oxidoreductase subunit A 1 of Geobacter sulfurreducens (strain ATCC 51573 / DSM 12127 / PCA).